The chain runs to 148 residues: Small ribosomal subunit protein uS9 (148 aa).

The protein belongs to the universal ribosomal protein uS9 family.

The protein is Small ribosomal subunit protein uS9 (RpS16) of Drosophila melanogaster (Fruit fly).